A 408-amino-acid polypeptide reads, in one-letter code: Probable acyl-CoA dehydrogenase 6 (408 aa).

Residue Glu265 is the Proton acceptor of the active site.

Belongs to the acyl-CoA dehydrogenase family. In terms of assembly, homotetramer. It depends on FAD as a cofactor.

The enzyme catalyses 3-methylbutanoyl-CoA + oxidized [electron-transfer flavoprotein] + H(+) = 3-methylbut-2-enoyl-CoA + reduced [electron-transfer flavoprotein]. It participates in amino-acid degradation; L-leucine degradation; (S)-3-hydroxy-3-methylglutaryl-CoA from 3-isovaleryl-CoA: step 1/3. In Caenorhabditis elegans, this protein is Probable acyl-CoA dehydrogenase 6 (acdh-6).